The following is a 530-amino-acid chain: MSVKHVSVLLLLLQLSCCFRTGSCGKVLVWPMDFSLWMNLNVILDELVRRGHEVIVLRNSASIFIDPSKQANIKFETFPIAATKDDLEDLFVHYVSTWTNARQNSQWKYFSLLQKLFSEYSDSCENACKEVVFNKTLMTKLQESRFDILLSDAIGPCGELLAELLKIPFVYSLRFTPGYTMEKYSGGLSVPPSYVPIILSDLSGKMTFMERVNNMLCMLYFDFWFQMFNKKRWDQFYSEVLGRPVTFSELVGKADMWLIRSYWDLEFPRPTLPNIQFVGGLHCKPAKPLPKEMEEFVQSSGEEGVVVFSLGSMVSNMTEERANLIASAFAQLPQKVIWRFDGQKPETLGPNTRIYDWIPQNDLLGHPKTKAFVTHGGANGIYEAIHHGIPMVGLPLFGEQPDNIAHMTAKGAAIRLNWKTMSSEDLLNALKTVINDPSYKENVMTLSSIHHDQPMKPLDRAVFWIEYVMRHKGAKHLRVAAHDLTWFQYHSLDVVGFLVSCAAFLIFLVIKSYLFVYQKLVKIGKKQKRD.

The first 24 residues, 1-24 (MSVKHVSVLLLLLQLSCCFRTGSC), serve as a signal peptide directing secretion. 2 N-linked (GlcNAc...) asparagine glycosylation sites follow: asparagine 134 and asparagine 316. The chain crosses the membrane as a helical span at residues 494-510 (VVGFLVSCAAFLIFLVI).

Belongs to the UDP-glycosyltransferase family.

The protein resides in the microsome membrane. It localises to the endoplasmic reticulum membrane. It carries out the reaction glucuronate acceptor + UDP-alpha-D-glucuronate = acceptor beta-D-glucuronoside + UDP + H(+). Its function is as follows. UDPGT is of major importance in the conjugation and subsequent elimination of potentially toxic xenobiotics and endogenous compounds. This is UDP-glucuronosyltransferase 2B14 (UGT2B14) from Oryctolagus cuniculus (Rabbit).